The chain runs to 317 residues: MGLQELDPLAQLSLPPGFRFYPTDEELMVEYLCRKAAGHDFSLQLIAEIDLYKFDPWVLPSKALFGEKEWYFFSPRDRKYPNGSRPNRVAGSGYWKATGTDKVISTEGRRVGIKKALVFYIGKAPKGTKTNWIMHEYRLIEPSRRNGSTKLDDWVLCRIYKKQTSAQKQAYNNLMTSGREYSNNGSSTSSSSHQYDDVLESLHEIDNRSLGFAAGSSNALPHSHRPVLTNHKTGFQGLAREPSFDWANLIGQNSVPELGLSHNVPSIRYGDGGTQQQTEGIPRFNNNSDVSANQGFSVDPVNGFGYSGQQSSGFGFI.

Residues 14 to 162 (LPPGFRFYPT…DWVLCRIYKK (149 aa)) form the NAC domain. Residues 111–168 (VGIKKALVFYIGKAPKGTKTNWIMHEYRLIEPSRRNGSTKLDDWVLCRIYKKQTSAQK) mediate DNA binding.

As to expression, expressed in leaves.

It localises to the nucleus. In terms of biological role, transcription factors that bind specifically to the 5'-CATGTG-3' motif. The protein is NAC domain-containing protein 55 (NAC055) of Arabidopsis thaliana (Mouse-ear cress).